The following is an 88-amino-acid chain: MKKSLFAAALLSLALAACGGEKAAEAPAAEASSTEAPAAEAPAAEAPAAEAAAAEAPAAEAPAAEAPAAEAAATEAPAAEAPAAEAAK.

A signal peptide spans 1–17 (MKKSLFAAALLSLALAA). Cysteine 18 is lipidated: N-palmitoyl cysteine. Cysteine 18 carries the S-diacylglycerol cysteine lipid modification. A run of 13 repeats spans residues 23–27 (AAEAP), 28–32 (AAEAS), 33–37 (STEAP), 38–42 (AAEAP), 43–47 (AAEAP), 48–52 (AAEAA), 53–57 (AAEAP), 58–62 (AAEAP), 63–67 (AAEAP), 68–72 (AAEAA), 73–77 (ATEAP), 78–82 (AAEAP), and 83–87 (AAEAA). A 13 X 5 AA tandem repeats of [AS]-[AT]-E-A-[PAS] region spans residues 23 to 87 (AAEAPAAEAS…AAEAPAAEAA (65 aa)). A disordered region spans residues 23-88 (AAEAPAAEAS…AEAPAAEAAK (66 aa)). A compositionally biased stretch (low complexity) spans 25–88 (EAPAAEASST…AEAPAAEAAK (64 aa)).

Its subcellular location is the cell outer membrane. The polypeptide is Outer membrane protein H.8 (Neisseria gonorrhoeae (strain ATCC 700825 / FA 1090)).